Consider the following 378-residue polypeptide: Probable pectin lyase A (378 aa).

Residues 1–18 form the signal peptide; the sequence is MKYASFLALVGFITSTSA. 2 disulfides stabilise this stretch: C81/C100 and C90/C224. R254 is an active-site residue. C321 and C329 form a disulfide bridge.

Belongs to the polysaccharide lyase 1 family.

It localises to the secreted. It catalyses the reaction Eliminative cleavage of (1-&gt;4)-alpha-D-galacturonan methyl ester to give oligosaccharides with 4-deoxy-6-O-methyl-alpha-D-galact-4-enuronosyl groups at their non-reducing ends.. Pectinolytic enzymes consist of four classes of enzymes: pectin lyase, polygalacturonase, pectin methylesterase and rhamnogalacturonase. Among pectinolytic enzymes, pectin lyase is the most important in depolymerization of pectin, since it cleaves internal glycosidic bonds of highly methylated pectins. The sequence is that of Probable pectin lyase A (pelA) from Aspergillus clavatus (strain ATCC 1007 / CBS 513.65 / DSM 816 / NCTC 3887 / NRRL 1 / QM 1276 / 107).